Consider the following 21-residue polypeptide: MSKVIETKQQVVTEIADKLRA.

It belongs to the universal ribosomal protein uL10 family. In terms of assembly, part of the ribosomal stalk of the 50S ribosomal subunit. The N-terminus interacts with L11 and the large rRNA to form the base of the stalk. The C-terminus forms an elongated spine to which L12 dimers bind in a sequential fashion forming a multimeric L10(L12)X complex.

Functionally, forms part of the ribosomal stalk, playing a central role in the interaction of the ribosome with GTP-bound translation factors. The polypeptide is Large ribosomal subunit protein uL10 (rplJ) (Bacillus cereus).